The following is a 104-amino-acid chain: Iron-sulfur cluster assembly protein CyaY (104 aa).

The protein belongs to the frataxin family.

Involved in iron-sulfur (Fe-S) cluster assembly. May act as a regulator of Fe-S biogenesis. The sequence is that of Iron-sulfur cluster assembly protein CyaY from Aliivibrio salmonicida (strain LFI1238) (Vibrio salmonicida (strain LFI1238)).